Here is a 593-residue protein sequence, read N- to C-terminus: Uncoordinated protein 58 (593 aa).

6 consecutive transmembrane segments (helical) span residues Val186–Leu206, Thr291–Val311, Val320–Ile340, Pro402–Ile422, Phe430–Val450, and Ile455–Val475.

The protein belongs to the two pore domain potassium channel (TC 1.A.1.8) family.

It localises to the membrane. Functionally, has a role in mobility, possibly in the transport of potassium in muscles. The protein is Uncoordinated protein 58 of Caenorhabditis briggsae.